Reading from the N-terminus, the 404-residue chain is Protein translocase subunit SecD (404 aa).

6 consecutive transmembrane segments (helical) span residues H7–V27, L239–V259, I262–L282, T283–I303, F330–L350, and G357–S377.

The protein belongs to the SecD/SecF family. SecD subfamily. In terms of assembly, forms a complex with SecF. Part of the essential Sec protein translocation apparatus which comprises SecA, SecYEG and auxiliary proteins SecDF. Other proteins may also be involved.

It localises to the cell inner membrane. Part of the Sec protein translocase complex. Interacts with the SecYEG preprotein conducting channel. SecDF uses the proton motive force (PMF) to complete protein translocation after the ATP-dependent function of SecA. The chain is Protein translocase subunit SecD from Leptotrichia buccalis (strain ATCC 14201 / DSM 1135 / JCM 12969 / NCTC 10249 / C-1013-b).